The primary structure comprises 180 residues: Probable chorismate pyruvate-lyase (180 aa).

3 residues coordinate substrate: arginine 76, leucine 113, and glutamate 171.

This sequence belongs to the UbiC family.

The protein localises to the cytoplasm. It catalyses the reaction chorismate = 4-hydroxybenzoate + pyruvate. Its pathway is cofactor biosynthesis; ubiquinone biosynthesis. Removes the pyruvyl group from chorismate, with concomitant aromatization of the ring, to provide 4-hydroxybenzoate (4HB) for the ubiquinone pathway. This is Probable chorismate pyruvate-lyase from Pseudoalteromonas translucida (strain TAC 125).